The sequence spans 117 residues: Ig heavy chain V region MOPC 104E (117 aa).

The Ig-like domain maps to 1–116 (EVQLQQSGPE…WGAGTTVTVS (116 aa)). A disulfide bridge links C22 with C96. N-linked (GlcNAc...) (high mannose) asparagine; atypical glycosylation is present at N55.

The sequence is that of Ig heavy chain V region MOPC 104E from Mus musculus (Mouse).